The sequence spans 27 residues: Pregnancy-associated glycoprotein 59 (27 aa).

The protein belongs to the peptidase A1 family. Post-translationally, glycosylated. As to expression, placenta.

The polypeptide is Pregnancy-associated glycoprotein 59 (PAG59) (Capra hircus (Goat)).